The following is a 302-amino-acid chain: NAD kinase 2 (302 aa).

The active-site Proton acceptor is Asp-78. NAD(+) contacts are provided by residues 78 to 79, 152 to 153, Asp-182, and 193 to 198; these read DG, NE, and TAYSLS.

It belongs to the NAD kinase family. A divalent metal cation serves as cofactor.

Its subcellular location is the cytoplasm. The catalysed reaction is NAD(+) + ATP = ADP + NADP(+) + H(+). Functionally, involved in the regulation of the intracellular balance of NAD and NADP, and is a key enzyme in the biosynthesis of NADP. Catalyzes specifically the phosphorylation on 2'-hydroxyl of the adenosine moiety of NAD to yield NADP. This chain is NAD kinase 2, found in Prochlorococcus marinus (strain NATL2A).